The following is a 155-amino-acid chain: Small ribosomal subunit protein uS7c (155 aa).

It belongs to the universal ribosomal protein uS7 family. In terms of assembly, part of the 30S ribosomal subunit.

Its subcellular location is the plastid. The protein localises to the chloroplast. Functionally, one of the primary rRNA binding proteins, it binds directly to 16S rRNA where it nucleates assembly of the head domain of the 30S subunit. The polypeptide is Small ribosomal subunit protein uS7c (rps7) (Cedrus deodara (Deodar cedar)).